A 4684-amino-acid chain; its full sequence is Plectin (4684 aa).

The globular 1 stretch occupies residues 1–1470 (MVAGMLMPRD…SELTTLTSQY (1470 aa)). A phosphoserine mark is found at F20 and R21. V26 bears the Phosphotyrosine mark. G42 bears the Phosphoserine mark. At T113 the chain carries Phosphothreonine. Phosphoserine is present on residues S125 and S149. The tract at residues 144 to 179 (ELEEVSPETPVVPATTQRTLARPGPEPAPATDERDR) is disordered. Positions 175–400 (DERDRVQKKT…YVSSLYDAMP (226 aa)) are actin-binding. 2 consecutive Calponin-homology (CH) domains span residues 179 to 282 (RVQK…LHFQ) and 295 to 400 (MTAK…DAMP). Residues 645–710 (LQSVQRRPEL…SIEEFRAKIE (66 aa)) form a Spectrin 1 repeat. S720 is subject to Phosphoserine. 2 Spectrin repeats span residues 740–824 (KLLN…REDH) and 837–930 (LQTQ…AVVQ). Positions 941-998 (RGRLPLLAVCDYKQVEVTVHKGDECQLVGPAQPSHWKVLSSSGSEAAVPSVCFLVPPP) constitute an SH3 domain. The tract at residues 964–4574 (ECQLVGPAQP…VGAYSKYLTC (3611 aa)) is required for interaction with intermediate filament proteins. S1047 carries the phosphoserine modification. The stretch at 1315–1415 (RERVAQLLER…QRFAKQYINA (101 aa)) is one Spectrin 4 repeat. S1435 carries the phosphoserine modification. Residues 1469-2756 (QYIKFISETL…AHSEEVTASQ (1288 aa)) are a coiled coil. The central fibrous rod domain stretch occupies residues 1471–2755 (IKFISETLRR…LAHSEEVTAS (1285 aa)). The interval 1618-1650 (RAEEAEAQKRQAQEEAERLRRQVQDESQRKRQA) is disordered. S1721 carries the phosphoserine modification. K1725 carries the N6-acetyllysine modification. At S1732 the chain carries Phosphoserine. 3 disordered regions span residues 1794–1836 (LAQA…KQRQ), 2105–2139 (EAAR…EAAR), and 2217–2307 (RGEA…MEKH). Composition is skewed to basic and acidic residues over residues 1798–1836 (EAEK…KQRQ), 2105–2128 (EAAR…ERVQ), and 2217–2258 (RGEA…KQSA). Residues 2259–2272 (EEQAQARAQAQAAA) show a composition bias toward low complexity. Residues 2273–2288 (EKLRKEAEQEAARRAQ) show a composition bias toward basic and acidic residues. S2631 carries the post-translational modification Phosphoserine. Residue K2636 is modified to N6-acetyllysine. Disordered regions lie at residues 2668–2707 (REEQ…RRKQ) and 2763–2784 (LPNG…HSFD). Positions 2679 to 2707 (EQERQRLVASMEEARRRQHEAEEGVRRKQ) are enriched in basic and acidic residues. The segment at 2756 to 4684 (QVAATKTLPN…SLGGPESAVA (1929 aa)) is globular 2. Phosphoserine occurs at positions 2782 and 2802. Plectin repeat units follow at residues 2826 to 2863 (RHYL…PGTA), 2864 to 2901 (LILL…PELH), 2902 to 2939 (HKLL…REHG), 2940 to 2977 (IRLL…EEMN), and 2981 to 3015 (ADPS…PETG). T2886 is subject to Phosphothreonine. A Phosphotyrosine modification is found at Y3033. S3036 bears the Phosphoserine mark. N6-acetyllysine is present on residues K3053 and K3091. Plectin repeat units lie at residues 3116-3153 (SLVP…VDTV), 3154-3191 (RRAL…SDMA), 3192-3229 (VALL…PEFH), 3230-3267 (EKLL…REQG), 3268-3305 (LRLL…EETS), and 3306-3343 (RALS…QLTG). The segment at 3310 to 3331 (APRADAKAYSDPSTGEPATYGE) is disordered. Y3362 carries the post-translational modification Phosphotyrosine. An N6-acetyllysine modification is found at K3420. Plectin repeat units lie at residues 3485 to 3522 (RTLL…ATTA), 3523 to 3560 (ALLL…PELH), 3561 to 3598 (EQLL…RQHG), 3599 to 3636 (IRLL…EEMN), and 3640 to 3674 (ADPS…PETG). S3580 is modified (phosphoserine). A Phosphothreonine modification is found at T3785. Plectin repeat units lie at residues 3820-3857 (WCYL…AEVA), 3858-3895 (RLLL…PELH), 3896-3933 (DRLL…TEEA), 3934-3971 (LRLL…KDTH), and 3975-4008 (SEPS…DGTG). Residues 3956–4293 (PLEVAYQRGY…ETGKEMSVYE (338 aa)) form a required for interaction with type2 keratins, DES and VIM region. T4030 is modified (phosphothreonine). A Phosphoserine modification is found at S4054. Plectin repeat units lie at residues 4063–4100 (QKFL…PGTA), 4101–4138 (FELL…PEFK), 4139–4176 (DKLL…KDHG), 4177–4214 (IRLL…EEMN), 4218–4252 (TDPS…PQTG), 4265–4305 (RKTS…HQTY), and 4319–4356 (TISS…RSAL). The segment at 4250–4300 (QTGLCLLPLKEKKRERKTSSKSSVRKRRVVIVDPETGKEMSVYEAYRKGLI) is binding to intermediate filaments. 8 positions are modified to phosphoserine: S4382, S4384, S4385, S4386, S4389, S4390, S4391, and S4392. Y4393 is modified (phosphotyrosine). 3 positions are modified to phosphoserine: S4396, S4400, and S4406. Plectin repeat units follow at residues 4408 to 4445 (SDPT…NITG), 4446 to 4483 (QRLL…KIMV), 4484 to 4521 (DRIN…YEAG), 4522 to 4559 (QRFL…ARTA), and 4560 to 4597 (QKLR…EGTG). A Phosphothreonine modification is found at T4411. Positions 4505–4574 (MSAAQALKKG…VGAYSKYLTC (70 aa)) are required for efficient interaction with KRT5 and KRT14 heterodimers. T4539 carries the phosphothreonine; by CDK1 modification. 2 positions are modified to phosphoserine: S4607 and S4613. Over residues 4611–4678 (YYSPYSVSGS…ASGSSASLGG (68 aa)) the composition is skewed to low complexity. Residues 4611-4684 (YYSPYSVSGS…SLGGPESAVA (74 aa)) are disordered. At Y4615 the chain carries Phosphotyrosine. 3 positions are modified to phosphoserine: S4616, S4618, and S4622. A Phosphothreonine modification is found at T4623. The 4 X 4 AA tandem repeats of G-S-R-X stretch occupies residues 4625–4640 (GSRTGSRTGSRAGSRR). S4626 bears the Phosphoserine mark. Residues R4627 and R4640 each carry the omega-N-methylarginine modification. S4642, S4672, and S4675 each carry phosphoserine.

The protein belongs to the plakin or cytolinker family. As to quaternary structure, homodimer or homotetramer. Interacts (via actin-binding domain) with SYNE3. Interacts (via calponin-homology (CH) 1 domain) with VIM (via rod region). Interacts (via N-terminus) with DST isoform 2 (via N-terminus). Interacts with FER. Interacts with TOR1A. Interacts with ANK3. Identified in complexes that contain VIM, EZR, AHNAK, BFSP1, BFSP2, ANK2, PLEC, PRX and spectrin. Interacts with COL17A1. Interacts with KRT14, heterodimers consisting of KRT8 and KRT18, heterodimers consisting of KRT5 and KRT14, heterodimers consisting of KRT14 and KRT15, and heterodimers consisting of KRT1 and KRT10. Interacts with DES and VIM. In terms of processing, phosphorylated by CDK1; regulates dissociation from intermediate filaments during mitosis. In terms of tissue distribution, widely expressed with highest levels in muscle, heart, placenta and spinal cord.

Its subcellular location is the cytoplasm. The protein localises to the cytoskeleton. The protein resides in the cell junction. It localises to the hemidesmosome. It is found in the cell projection. Its subcellular location is the podosome. Functionally, interlinks intermediate filaments with microtubules and microfilaments and anchors intermediate filaments to desmosomes or hemidesmosomes. Could also bind muscle proteins such as actin to membrane complexes in muscle. May be involved not only in the filaments network, but also in the regulation of their dynamics. Structural component of muscle. Isoform 9 plays a major role in the maintenance of myofiber integrity. The polypeptide is Plectin (PLEC) (Homo sapiens (Human)).